Consider the following 160-residue polypeptide: RNA-binding protein 3 (160 aa).

An RRM domain is found at 6–84 (GKLFVGGLNF…RQIRVDHAGK (79 aa)). Arg-47 bears the Omega-N-methylarginine mark. The segment at 81–116 (HAGKSARGSRGGAFGSYERGRGYPRGGGDQGYGSGR) is disordered. Residues 103-114 (YPRGGGDQGYGS) show a composition bias toward gly residues. Arg-105 carries the post-translational modification Asymmetric dimethylarginine; alternate. Arg-105 is modified (dimethylated arginine; alternate). Omega-N-methylarginine; alternate is present on Arg-105. Omega-N-methylarginine occurs at positions 120 and 134. Residues 135–160 (SRDYGGRSQGGYDRYSGGNYRDNYDN) form a disordered region. Ser-150 is modified (phosphoserine). The residue at position 158 (Tyr-158) is a Phosphotyrosine.

Interacts with RPL4. Associates with the 60S ribosomal subunits.

Its subcellular location is the nucleus. The protein resides in the cytoplasm. The protein localises to the cell projection. It localises to the dendrite. Its function is as follows. Cold-inducible mRNA binding protein that enhances global protein synthesis at both physiological and mild hypothermic temperatures. Reduces the relative abundance of microRNAs, when overexpressed. Enhances phosphorylation of translation initiation factors and active polysome formation. This Capra hircus (Goat) protein is RNA-binding protein 3.